A 490-amino-acid chain; its full sequence is Betaine aldehyde dehydrogenase (490 aa).

2 residues coordinate K(+): Ile-27 and Asp-93. Position 150–152 (150–152) interacts with NAD(+); it reads GAW. The active-site Charge relay system is the Lys-162. 176 to 179 lines the NAD(+) pocket; sequence KPSE. Val-180 contributes to the K(+) binding site. 230–233 provides a ligand contact to NAD(+); sequence GTDT. K(+) is bound at residue Leu-246. Glu-252 serves as the catalytic Proton acceptor. 3 residues coordinate NAD(+): Gly-254, Cys-286, and Glu-387. Cys-286 acts as the Nucleophile in catalysis. A Cysteine sulfenic acid (-SOH) modification is found at Cys-286. Residues Lys-457 and Gly-460 each coordinate K(+). Glu-464 functions as the Charge relay system in the catalytic mechanism.

This sequence belongs to the aldehyde dehydrogenase family. Dimer of dimers. The cofactor is K(+).

It catalyses the reaction betaine aldehyde + NAD(+) + H2O = glycine betaine + NADH + 2 H(+). The protein operates within amine and polyamine biosynthesis; betaine biosynthesis via choline pathway; betaine from betaine aldehyde: step 1/1. Involved in the biosynthesis of the osmoprotectant glycine betaine. Catalyzes the irreversible oxidation of betaine aldehyde to the corresponding acid. In Pseudomonas fluorescens (strain Pf0-1), this protein is Betaine aldehyde dehydrogenase.